The following is a 251-amino-acid chain: 5'-nucleotidase SurE (251 aa).

Residues D8, D9, S40, and N95 each contribute to the a divalent metal cation site.

This sequence belongs to the SurE nucleotidase family. The cofactor is a divalent metal cation.

The protein localises to the cytoplasm. The enzyme catalyses a ribonucleoside 5'-phosphate + H2O = a ribonucleoside + phosphate. In terms of biological role, nucleotidase that shows phosphatase activity on nucleoside 5'-monophosphates. This is 5'-nucleotidase SurE from Lawsonia intracellularis (strain PHE/MN1-00).